The sequence spans 170 residues: 3-isopropylmalate dehydratase small subunit 1 (170 aa).

It belongs to the LeuD family. LeuD type 2 subfamily. In terms of assembly, heterodimer of LeuC and LeuD.

It carries out the reaction (2R,3S)-3-isopropylmalate = (2S)-2-isopropylmalate. It functions in the pathway amino-acid biosynthesis; L-leucine biosynthesis; L-leucine from 3-methyl-2-oxobutanoate: step 2/4. Functionally, catalyzes the isomerization between 2-isopropylmalate and 3-isopropylmalate, via the formation of 2-isopropylmaleate. The chain is 3-isopropylmalate dehydratase small subunit 1 (leuD1) from Methanopyrus kandleri (strain AV19 / DSM 6324 / JCM 9639 / NBRC 100938).